A 437-amino-acid chain; its full sequence is GTP-binding protein ERG (437 aa).

The segment covering 39-50 (QPNLDEPTSINE) has biased composition (polar residues). The interval 39–65 (QPNLDEPTSINEDGSSSDSVFDSSQYP) is disordered. Residues 51–62 (DGSSSDSVFDSS) are compositionally biased toward low complexity. 2 positions are modified to phosphoserine: S111 and S112. The Era-type G domain maps to 152-333 (KSLNVGIIGP…LMDQAVKKPW (182 aa)). Residues 160–167 (GPPNAGKS) form a G1 region. 160–167 (GPPNAGKS) contacts GTP. Positions 186–190 (NTTTH) are G2. Residues 207 to 210 (DTPG) form a G3 region. GTP-binding positions include 207-211 (DTPGL) and 279-282 (NKVD). The G4 stretch occupies residues 279-282 (NKVD). The interval 309–311 (ISG) is G5. Residues 361–437 (VHQEIPYGLE…VHLILQVKLK (77 aa)) form the KH type-2 domain.

The protein belongs to the TRAFAC class TrmE-Era-EngA-EngB-Septin-like GTPase superfamily. Era GTPase family.

Has a crucial role in plant growth and development, possibly by influencing mitochondrial division. The protein is GTP-binding protein ERG (ERG) of Arabidopsis thaliana (Mouse-ear cress).